Here is a 182-residue protein sequence, read N- to C-terminus: Caltractin ICL1b (182 aa).

The tract at residues 1-31 is disordered; it reads MSRRGQQPPPQQQQAPPQKNQAGKFNPAEFV. EF-hand domains lie at 38 to 73, 74 to 109, 111 to 146, and 147 to 182; these read EEVL…LGFE, AKNQ…RISE, DSKA…LGET, and MDDS…KTFA. Ca(2+) is bound by residues Asp-51, Asp-53, Thr-55, Ser-57, Glu-62, Asp-87, Asp-89, Ser-91, Gln-93, and Glu-98.

This sequence belongs to the centrin family.

It is found in the cytoplasm. The protein resides in the cytoskeleton. In terms of biological role, plays a fundamental role in microtubule organizing center structure and function. Component of the infraciliary lattice (ICL) and the ciliary basal bodies. The polypeptide is Caltractin ICL1b (Icl1b) (Paramecium tetraurelia).